A 528-amino-acid polypeptide reads, in one-letter code: Arginine--tRNA ligase (528 aa).

The 'HIGH' region motif lies at 112 to 122; the sequence is ANPTGPLHIGH.

This sequence belongs to the class-I aminoacyl-tRNA synthetase family. In terms of assembly, monomer.

It is found in the cytoplasm. It carries out the reaction tRNA(Arg) + L-arginine + ATP = L-arginyl-tRNA(Arg) + AMP + diphosphate. This is Arginine--tRNA ligase from Wolinella succinogenes (strain ATCC 29543 / DSM 1740 / CCUG 13145 / JCM 31913 / LMG 7466 / NCTC 11488 / FDC 602W) (Vibrio succinogenes).